The primary structure comprises 303 residues: Putative S-adenosyl-L-methionine-dependent methyltransferase SCO6443 (303 aa).

S-adenosyl-L-methionine is bound by residues Asp130 and 159–160; that span reads DL.

The protein belongs to the UPF0677 family.

Its function is as follows. Exhibits S-adenosyl-L-methionine-dependent methyltransferase activity. In Streptomyces coelicolor (strain ATCC BAA-471 / A3(2) / M145), this protein is Putative S-adenosyl-L-methionine-dependent methyltransferase SCO6443.